We begin with the raw amino-acid sequence, 144 residues long: TSC22 domain family protein 1 (144 aa).

The segment at 77–98 is leucine-zipper; the sequence is LKEQIKELIEKNSQLEQENNLL. The segment at 109–144 is disordered; it reads QFQAQLQTGSPPATTQPQGSTQPPAQPASQGSGPTA.

Belongs to the TSC-22/Dip/Bun family. In terms of assembly, forms homodimers. Forms a heterodimer with TSC22D4/THG1. Interacts with histone H1-2. Interacts with GNL3.

The protein resides in the cytoplasm. It localises to the nucleus. The protein localises to the mitochondrion. Functionally, transcriptional repressor. Plays a role in the repression of hematopoietic precursor cell growth. Promotes IL2 deprivation-induced apoptosis in T-lymphocytes, via repression of TSC22D3/GILZ transcription and activation of the caspase cascade. Positively regulates cell death in response to TGFB3 during mammary gland involution. In Bathyergus suillus (Cape dune mole rat), this protein is TSC22 domain family protein 1.